Reading from the N-terminus, the 479-residue chain is MATVSELCCAALNTSIGNRIAFPGSTAYNESLSSYFGVNAQLPPSCFVLPLSAQDVSVAVQTLTSQPDPCFFAIRSGGHTTSLGASAIEAGVTMDLSGMNTTTYDSSTNTAFIQPGARWGSVYETLLRDNVLVPGGRTASVGVGGYLTGGRNSFHAARVGLACLSIKGYEIVLADGEVAKVDQDSHPNLFRALKGGSNNFGIVTLFDMEAFSTEGTIWGGTVLYDISTKDQYIAAGTAFTDNIPNDPYASWVGMFAYNSTTDQTAIFTSLAYTRPVQSWPQAFSEFYAIPNITHTLRSATVLDLAVENSFPYGYRNVLQTGTYSNNAEIIQKAVIILNNQVKMAKLRARGKDYALFAIVQPWVPLFWEHSEARGGDVLGLERFETNLLNIAWDYSWDNSADDELLYELAQSAREQLDEYARSTGAYNEYIYLNYAGRTQDPLRGYGLENLEFLRRVSEKFDPDGVFQRLVRGGFKIDRA.

An FAD-binding PCMH-type domain is found at 40–213 (AQLPPSCFVL…TLFDMEAFST (174 aa)). H79 is subject to Pros-8alpha-FAD histidine.

The protein belongs to the oxygen-dependent FAD-linked oxidoreductase family. FAD is required as a cofactor.

The protein operates within secondary metabolite biosynthesis. Functionally, FAD-dependent monooxygenase; part of the gene cluster that mediates the biosynthesis of the polyenes aspernidgulenes. The carbon backbone of aspernidgulenes is synthesized by the HR-PKS sdgA, which accepts acetyl-CoA as the starter unit and performs malonyl-CoA extensions as well as regioselective methylation and reduction. The resulting nonaketide offloads the HR-PKS by intramolecular lactonization to yield the 5,6-dihydro-alpha-pyrone-containing hexaenoic acids preaspernidgulene A1 and A2. The FAD-dependent monooxygenase sdgC then installs the first epoxide on the penultimate double bond. Subsequently, the FAD-dependent monooxygenase sdgF presumably generates a ketone intermediate through Meinwald rearrangement involving a hydride shift. Next, sdgC introduces another epoxide on the last olefin of the ketone intermediate after E/Z isomerization. The epoxide hydrolase sdgD then catalyzes stereospecific cyclization of the 5,6-dihydro-alpha-pyrone and opening of the epoxide ring to form an oxygenated trimethylcyclopentanone and an oxabicyclo[2.2.1]heptane unit. Finally, the bicyclic unit undergoes hydrolytic cleavage, either spontaneously or catalyzed by sdgD, to assemble the dimethyl-gamma-lactone moiety in aspernidgulene A1. The polypeptide is FAD-dependent monooxygenase sdcF (Emericella nidulans (strain FGSC A4 / ATCC 38163 / CBS 112.46 / NRRL 194 / M139) (Aspergillus nidulans)).